The sequence spans 259 residues: Envelope biogenesis factor ElyC (259 aa).

Transmembrane regions (helical) follow at residues 12 to 32 (MLLP…LLWF) and 39 to 59 (GKIF…QPVA).

Its subcellular location is the cell inner membrane. Plays a critical role in the metabolism of the essential lipid carrier used for cell wall synthesis. The protein is Envelope biogenesis factor ElyC (elyC) of Escherichia coli O157:H7.